The chain runs to 206 residues: Thymidylate kinase (206 aa).

10 to 17 (GIDGAGKS) is an ATP binding site.

It belongs to the thymidylate kinase family.

The enzyme catalyses dTMP + ATP = dTDP + ADP. Its function is as follows. Phosphorylation of dTMP to form dTDP in both de novo and salvage pathways of dTTP synthesis. In Neisseria gonorrhoeae (strain ATCC 700825 / FA 1090), this protein is Thymidylate kinase.